A 229-amino-acid polypeptide reads, in one-letter code: UPF0758 protein Cagg_0777 (229 aa).

Positions 105–227 constitute an MPN domain; that stretch reads PIRSPGDVAA…YVSLRERGIG (123 aa). Zn(2+)-binding residues include histidine 176, histidine 178, and aspartate 189. Residues 176 to 189 carry the JAMM motif motif; sequence HNHPSGEATPSPED.

This sequence belongs to the UPF0758 family.

The sequence is that of UPF0758 protein Cagg_0777 from Chloroflexus aggregans (strain MD-66 / DSM 9485).